The primary structure comprises 1081 residues: Zinc finger protein 827 (1081 aa).

Over residues 1-10 the composition is skewed to basic and acidic residues; sequence MPRRKQEQPK. The tract at residues 1-14 is mediates direct interaction with RBBP4; that stretch reads MPRRKQEQPKRLPS. The disordered stretch occupies residues 1 to 77; it reads MPRRKQEQPK…DTSLGSTTPS (77 aa). Residues 3–5 carry the RRK motif; mediates NuRD recruitment to telomeres motif; the sequence is RRK. The segment covering 62 to 77 has biased composition (polar residues); the sequence is EQSTSPDTSLGSTTPS. Residues Lys176, Lys216, and Lys226 each participate in a glycyl lysine isopeptide (Lys-Gly) (interchain with G-Cter in SUMO2) cross-link. 2 disordered regions span residues 258 to 280 and 305 to 348; these read KKVS…SFLS and EKSS…SLEL. Residues 327-344 show a composition bias toward pro residues; it reads VSPPPPPPPPPPPPPPPQ. Residues Lys360 and Lys372 each participate in a glycyl lysine isopeptide (Lys-Gly) (interchain with G-Cter in SUMO2) cross-link. 3 C2H2-type zinc fingers span residues 374–396, 402–424, and 433–455; these read FQCP…MVIH, HQCP…MKVH, and FQCQ…MRCH. Residues Lys466, Lys475, Lys523, Lys549, Lys580, Lys587, and Lys597 each participate in a glycyl lysine isopeptide (Lys-Gly) (interchain with G-Cter in SUMO2) cross-link. Residues 525-553 are disordered; sequence EPKEDNGLPTSFTLNTADRPANHTKLKDP. Polar residues predominate over residues 616–627; sequence VFSPESEVSTPG. Residues 616–640 are disordered; it reads VFSPESEVSTPGVSEDALKPQEGKG. A compositionally biased stretch (basic and acidic residues) spans 631-640; the sequence is DALKPQEGKG. Glycyl lysine isopeptide (Lys-Gly) (interchain with G-Cter in SUMO2) cross-links involve residues Lys634, Lys639, and Lys658. Residue Lys673 forms a Glycyl lysine isopeptide (Lys-Gly) (interchain with G-Cter in SUMO1); alternate linkage. Residue Lys673 forms a Glycyl lysine isopeptide (Lys-Gly) (interchain with G-Cter in SUMO2); alternate linkage. Residues Lys704, Lys710, Lys742, Lys778, and Lys798 each participate in a glycyl lysine isopeptide (Lys-Gly) (interchain with G-Cter in SUMO2) cross-link. C2H2-type zinc fingers lie at residues 817-839 and 845-867; these read FPCD…LSLH and YKCH…LTVH. Residues Lys870 and Lys891 each participate in a glycyl lysine isopeptide (Lys-Gly) (interchain with G-Cter in SUMO2) cross-link. 2 C2H2-type zinc fingers span residues 897-919 and 929-952; these read YSCH…MSLH and ICCT…GTKH. Positions 947–960 are enriched in basic and acidic residues; sequence HIGTKHTGEDRKTP. The disordered stretch occupies residues 947 to 1013; that stretch reads HIGTKHTGED…GSQPSLNSEE (67 aa). A Glycyl lysine isopeptide (Lys-Gly) (interchain with G-Cter in SUMO2) cross-link involves residue Lys958. Residues 961–978 are compositionally biased toward low complexity; it reads SESNSPSSSSLSALSDSA. Basic and acidic residues predominate over residues 979 to 988; the sequence is NSKDDSDGSQ. Lys1014 is covalently cross-linked (Glycyl lysine isopeptide (Lys-Gly) (interchain with G-Cter in SUMO2)). 2 consecutive C2H2-type zinc fingers follow at residues 1019 to 1041 and 1047 to 1069; these read FECV…LQIH and FECD…KKCH.

This sequence belongs to the krueppel C2H2-type zinc-finger protein family. In terms of assembly, part of a transcription inhibitory ribonucleoprotein complex composed at least of the circular RNA circZNF827, HNRNPK and HNRNPL. Interacts with the nucleosome remodeling and histone deacetylase/NuRD complex. Interacts with RBBP4; the interaction is direct and recruits RBBP4, a component of the NuRD complex, to telomeres.

The protein localises to the nucleus. Its subcellular location is the chromosome. It localises to the telomere. Functionally, as part of a ribonucleoprotein complex composed at least of HNRNPK, HNRNPL and the circular RNA circZNF827 that nucleates the complex on chromatin, may negatively regulate the transcription of genes involved in neuronal differentiation. Could also recruit the nucleosome remodeling and histone deacetylase/NuRD complex to telomeric regions of chromosomes to regulate chromatin remodeling as part of telomere maintenance. This is Zinc finger protein 827 (ZNF827) from Macaca fascicularis (Crab-eating macaque).